The primary structure comprises 227 residues: Urease accessory protein UreF (227 aa).

This sequence belongs to the UreF family. As to quaternary structure, ureD, UreF and UreG form a complex that acts as a GTP-hydrolysis-dependent molecular chaperone, activating the urease apoprotein by helping to assemble the nickel containing metallocenter of UreC. The UreE protein probably delivers the nickel.

The protein resides in the cytoplasm. Its function is as follows. Required for maturation of urease via the functional incorporation of the urease nickel metallocenter. This is Urease accessory protein UreF from Blochmanniella floridana.